Reading from the N-terminus, the 359-residue chain is Stearoyl-CoA desaturase (359 aa).

At 1-72 (MPAHLLQEEI…EGPKPKLEYV (72 aa)) the chain is on the cytoplasmic side. The helical transmembrane segment at 73-93 (WRNIILMSLLHLGALYGITLI) threads the bilayer. A substrate-binding site is contributed by N75. The Lumenal segment spans residues 94–97 (PTCK). The chain crosses the membrane as a helical span at residues 98-118 (IYTYIWVLFYYLMGALGITAG). The Cytoplasmic segment spans residues 119 to 217 (AHRLWSHRTY…EKLVMFQRRY (99 aa)). Fe cation-binding residues include H120 and H125. The short motif at 120–125 (HRLWSH) is the Histidine box-1 element. Positions 148, 155, and 156 each coordinate substrate. Residues H157, H160, and H161 each contribute to the Fe cation site. The Histidine box-2 signature appears at 157–161 (HRAHH). Residues R188 and K189 each coordinate substrate. S198 and S203 each carry phosphoserine. The helical transmembrane segment at 218–237 (YKPGVLLLCFILPTLVPWYL) threads the bilayer. At 238–241 (WDET) the chain is on the lumenal side. A helical membrane pass occupies residues 242–263 (FQNSLFFATLFRYALGLNVTWL). W262 is a substrate binding site. Residues 264 to 359 (VNSAAHMYGY…RTGEESYKSG (96 aa)) are Cytoplasmic-facing. H269, H298, H301, and H302 together coordinate Fe cation. The Histidine box-3 motif lies at 298-302 (HNYHH).

Belongs to the fatty acid desaturase type 1 family. The cofactor is Fe(2+).

The protein resides in the endoplasmic reticulum membrane. The enzyme catalyses octadecanoyl-CoA + 2 Fe(II)-[cytochrome b5] + O2 + 2 H(+) = (9Z)-octadecenoyl-CoA + 2 Fe(III)-[cytochrome b5] + 2 H2O. It carries out the reaction hexadecanoyl-CoA + 2 Fe(II)-[cytochrome b5] + O2 + 2 H(+) = (9Z)-hexadecenoyl-CoA + 2 Fe(III)-[cytochrome b5] + 2 H2O. Functionally, stearoyl-CoA desaturase that utilizes O(2) and electrons from reduced cytochrome b5 to introduce the first double bond into saturated fatty acyl-CoA substrates. Catalyzes the insertion of a cis double bond at the delta-9 position into fatty acyl-CoA substrates including palmitoyl-CoA and stearoyl-CoA. Gives rise to a mixture of 16:1 and 18:1 unsaturated fatty acids. Plays an important role in lipid biosynthesis. Plays an important role in regulating the expression of genes that are involved in lipogenesis and in regulating mitochondrial fatty acid oxidation. Plays an important role in body energy homeostasis. Contributes to the biosynthesis of membrane phospholipids, cholesterol esters and triglycerides. The sequence is that of Stearoyl-CoA desaturase (SCD) from Bos taurus (Bovine).